The following is a 363-amino-acid chain: 1-aminocyclopropane-1-carboxylate oxidase homolog (363 aa).

The Fe2OG dioxygenase domain maps to 212–312; that stretch reads FHLFCSCNYY…MSITCFFGES (101 aa). Fe cation is bound by residues histidine 236, aspartate 238, and histidine 292.

This sequence belongs to the iron/ascorbate-dependent oxidoreductase family.

This chain is 1-aminocyclopropane-1-carboxylate oxidase homolog (ACO3), found in Solanum lycopersicum (Tomato).